We begin with the raw amino-acid sequence, 189 residues long: Protein GrpE (189 aa).

The interval 1–24 (MADEQNLDTQNPEAQAAENAAPSD) is disordered. The segment covering 10-24 (QNPEAQAAENAAPSD) has biased composition (low complexity).

The protein belongs to the GrpE family. In terms of assembly, homodimer.

It localises to the cytoplasm. Its function is as follows. Participates actively in the response to hyperosmotic and heat shock by preventing the aggregation of stress-denatured proteins, in association with DnaK and GrpE. It is the nucleotide exchange factor for DnaK and may function as a thermosensor. Unfolded proteins bind initially to DnaJ; upon interaction with the DnaJ-bound protein, DnaK hydrolyzes its bound ATP, resulting in the formation of a stable complex. GrpE releases ADP from DnaK; ATP binding to DnaK triggers the release of the substrate protein, thus completing the reaction cycle. Several rounds of ATP-dependent interactions between DnaJ, DnaK and GrpE are required for fully efficient folding. This is Protein GrpE from Ectopseudomonas mendocina (strain ymp) (Pseudomonas mendocina).